The following is a 353-amino-acid chain: Protein MGF 360-11L (353 aa).

This sequence belongs to the asfivirus MGF 360 family. Interacts with host TBK1 ad IRF7.

Its function is as follows. Plays a role in virus cell tropism, and may be required for efficient virus replication in macrophages. In addition, inhibits the phosphorylation of host TBK1 and IRF7 and thereby negatively regulates the host cGAS signaling pathway and antagonizes IFN-mediated antiviral activity. The chain is Protein MGF 360-11L from African swine fever virus (isolate Tick/South Africa/Pretoriuskop Pr4/1996) (ASFV).